The primary structure comprises 380 residues: Cytochrome b (380 aa).

4 consecutive transmembrane segments (helical) span residues 33 to 53, 77 to 98, 113 to 133, and 178 to 198; these read FGSLLGLCLFSQILTGLFLAM, WFIRSLHANGASFFFICIYLHI, WTIGVVLLGLVMATAFVGYVL, and FFTFHFLLPFIIAAATLVHLL. Positions 83 and 97 each coordinate heme b. Heme b-binding residues include H182 and H196. H201 provides a ligand contact to a ubiquinone. 4 helical membrane-spanning segments follow: residues 226 to 246, 288 to 308, 320 to 340, and 347 to 367; these read YKDLLGFLALLSALTSLALFS, LGGVLALLFSILVLVLVPILH, LTQTLFWTLVADMLILTWIGG, and FVIIGQVASTLYFLLFLVLAP.

It belongs to the cytochrome b family. As to quaternary structure, the cytochrome bc1 complex contains 3 respiratory subunits (MT-CYB, CYC1 and UQCRFS1), 2 core proteins (UQCRC1 and UQCRC2) and probably 6 low-molecular weight proteins. Heme b is required as a cofactor.

Its subcellular location is the mitochondrion inner membrane. In terms of biological role, component of the ubiquinol-cytochrome c reductase complex (complex III or cytochrome b-c1 complex) that is part of the mitochondrial respiratory chain. The b-c1 complex mediates electron transfer from ubiquinol to cytochrome c. Contributes to the generation of a proton gradient across the mitochondrial membrane that is then used for ATP synthesis. In Lampris guttatus (Opah), this protein is Cytochrome b (mt-cyb).